We begin with the raw amino-acid sequence, 346 residues long: Dihydroorotase (346 aa).

Residues His-13 and His-15 each coordinate Zn(2+). Substrate contacts are provided by residues 15–17 (HLR) and Asn-41. 3 residues coordinate Zn(2+): Lys-99, His-136, and His-174. Residue Lys-99 is modified to N6-carboxylysine. His-136 is a binding site for substrate. Substrate is bound at residue Leu-219. Asp-247 lines the Zn(2+) pocket. The active site involves Asp-247. The substrate site is built by His-251 and Ala-263.

This sequence belongs to the metallo-dependent hydrolases superfamily. DHOase family. Class II DHOase subfamily. As to quaternary structure, homodimer. It depends on Zn(2+) as a cofactor.

It carries out the reaction (S)-dihydroorotate + H2O = N-carbamoyl-L-aspartate + H(+). Its pathway is pyrimidine metabolism; UMP biosynthesis via de novo pathway; (S)-dihydroorotate from bicarbonate: step 3/3. Catalyzes the reversible cyclization of carbamoyl aspartate to dihydroorotate. This is Dihydroorotase from Rhizobium rhizogenes (strain K84 / ATCC BAA-868) (Agrobacterium radiobacter).